The sequence spans 119 residues: Large ribosomal subunit protein uL24 (119 aa).

The protein belongs to the universal ribosomal protein uL24 family. Part of the 50S ribosomal subunit.

In terms of biological role, one of two assembly initiator proteins, it binds directly to the 5'-end of the 23S rRNA, where it nucleates assembly of the 50S subunit. Its function is as follows. Located at the polypeptide exit tunnel on the outside of the subunit. This chain is Large ribosomal subunit protein uL24, found in Haloquadratum walsbyi (strain DSM 16790 / HBSQ001).